Consider the following 110-residue polypeptide: Parvalbumin alpha (110 aa).

2 EF-hand domains span residues 39–74 (KNAKDVEAVFYILDKDKSGFIEEDELKSVLKCFAPE) and 78–110 (LSEKETKDLLTAGDEDGDGKIGVSEFIQLVANS). Positions 52, 54, 56, 58, 60, 63, 91, 93, 95, 97, and 102 each coordinate Ca(2+).

Belongs to the parvalbumin family.

Its function is as follows. In muscle, parvalbumin is thought to be involved in relaxation after contraction. It binds two calcium ions. This is Parvalbumin alpha from Callorhinchus milii (Ghost shark).